A 349-amino-acid chain; its full sequence is MGIKGLTKLLADNAPDSMKEQKFESYFGRKIAIDASMSIYSFLVVVGRTGTDMLTNDAGEVTSHLIGMFNRTIRVLEAGLKPVYVFDGKPPEMKGGELAKRLARREEAVESLATAKLEGNEADMEKYSKRTVKVTKQHNEDCRKLLRLMGVPVVEAPSEAEAECASLCKTGKVYAVASEDMDSLTFGSTRFLRHLMEPVSRKLPVMEFDMNKVLEGLSLTMDQFVDLCILCGCDYIDTIRGIGAQTALKLIRQHGSLEKILENLNKDRYQIPDPWPYEEARRLFKEPLVTQAEDVPDFKWTAPDAEGLIKFLVEENGFNHDRVQTAIKKIQLAKNKSSQGRFVNCLCRL.

Residues 1–105 (MGIKGLTKLL…GELAKRLARR (105 aa)) are N-domain. Asp-34 provides a ligand contact to Mg(2+). Arg-71 provides a ligand contact to DNA. Mg(2+) is bound by residues Asp-87, Glu-159, Glu-161, Asp-180, and Asp-182. The interval 123–254 (DMEKYSKRTV…QTALKLIRQH (132 aa)) is I-domain. Glu-159 serves as a coordination point for DNA. Residues Gly-232 and Asp-234 each contribute to the DNA site. Asp-234 contacts Mg(2+).

This sequence belongs to the XPG/RAD2 endonuclease family. FEN1 subfamily. As to quaternary structure, interacts with PCNA. Three molecules of FEN1 bind to one PCNA trimer with each molecule binding to one PCNA monomer. PCNA stimulates the nuclease activity without altering cleavage specificity. It depends on Mg(2+) as a cofactor. In terms of processing, phosphorylated. Phosphorylation upon DNA damage induces relocalization to the nuclear plasma.

It is found in the nucleus. The protein localises to the nucleolus. It localises to the nucleoplasm. The protein resides in the mitochondrion. In terms of biological role, structure-specific nuclease with 5'-flap endonuclease and 5'-3' exonuclease activities involved in DNA replication and repair. During DNA replication, cleaves the 5'-overhanging flap structure that is generated by displacement synthesis when DNA polymerase encounters the 5'-end of a downstream Okazaki fragment. It enters the flap from the 5'-end and then tracks to cleave the flap base, leaving a nick for ligation. Also involved in the long patch base excision repair (LP-BER) pathway, by cleaving within the apurinic/apyrimidinic (AP) site-terminated flap. Acts as a genome stabilization factor that prevents flaps from equilibrating into structures that lead to duplications and deletions. Also possesses 5'-3' exonuclease activity on nicked or gapped double-stranded DNA, and exhibits RNase H activity. Also involved in replication and repair of rDNA and in repairing mitochondrial DNA. This is Flap endonuclease 1-B from Physcomitrium patens (Spreading-leaved earth moss).